Here is a 438-residue protein sequence, read N- to C-terminus: Transmembrane protein 184C (438 aa).

7 consecutive transmembrane segments (helical) span residues 17-37 (LVAV…VWEL), 48-68 (AWFI…WVIL), 86-106 (ILWM…YPGI), 179-199 (YTVV…LGIY), 212-232 (YLVI…LLFY), 254-274 (VVFV…VGVI), and 287-307 (AVAT…AAIA). Residues 358–438 (PRKKLFPEDQ…KEPSDKSVDS (81 aa)) form a disordered region. Composition is skewed to low complexity over residues 374–390 (SLLS…ASSM) and 404–413 (TVTPQTTPTT). The residue at position 422 (Ser-422) is a Phosphoserine. Over residues 425-438 (IGEKKEPSDKSVDS) the composition is skewed to basic and acidic residues.

Belongs to the TMEM184 family.

It is found in the membrane. Possible tumor suppressor which may play a role in cell growth. The sequence is that of Transmembrane protein 184C (TMEM184C) from Pongo abelii (Sumatran orangutan).